The chain runs to 268 residues: Glutamate racemase (268 aa).

Residues 9 to 10 (DS) and 41 to 42 (YG) contribute to the substrate site. The active-site Proton donor/acceptor is the cysteine 73. 74 to 75 (NS) contacts substrate. Cysteine 183 functions as the Proton donor/acceptor in the catalytic mechanism. A substrate-binding site is contributed by 184-185 (TH).

This sequence belongs to the aspartate/glutamate racemases family.

It catalyses the reaction L-glutamate = D-glutamate. It participates in cell wall biogenesis; peptidoglycan biosynthesis. Its function is as follows. Provides the (R)-glutamate required for cell wall biosynthesis. The sequence is that of Glutamate racemase from Shewanella piezotolerans (strain WP3 / JCM 13877).